A 628-amino-acid chain; its full sequence is Chaperone protein DnaK (628 aa).

The residue at position 197 (threonine 197) is a Phosphothreonine; by autocatalysis. The segment covering 595 to 604 (AEAMYKKEQG) has biased composition (basic and acidic residues). Residues 595–628 (AEAMYKKEQGEQAGAQPNQKAKKDDDDVIDAEVE) are disordered.

Belongs to the heat shock protein 70 family.

Its function is as follows. Acts as a chaperone. The protein is Chaperone protein DnaK of Aliarcobacter butzleri (strain RM4018) (Arcobacter butzleri).